The chain runs to 78 residues: ATP synthase subunit c (78 aa).

Transmembrane regions (helical) follow at residues 11 to 31 and 53 to 73; these read FIGA…VGHV and LFVG…IALL.

The protein belongs to the ATPase C chain family. In terms of assembly, F-type ATPases have 2 components, F(1) - the catalytic core - and F(0) - the membrane proton channel. F(1) has five subunits: alpha(3), beta(3), gamma(1), delta(1), epsilon(1). F(0) has four main subunits: a(1), b(1), b'(1) and c(10-14). The alpha and beta chains form an alternating ring which encloses part of the gamma chain. F(1) is attached to F(0) by a central stalk formed by the gamma and epsilon chains, while a peripheral stalk is formed by the delta, b and b' chains.

Its subcellular location is the cell inner membrane. Its function is as follows. F(1)F(0) ATP synthase produces ATP from ADP in the presence of a proton or sodium gradient. F-type ATPases consist of two structural domains, F(1) containing the extramembraneous catalytic core and F(0) containing the membrane proton channel, linked together by a central stalk and a peripheral stalk. During catalysis, ATP synthesis in the catalytic domain of F(1) is coupled via a rotary mechanism of the central stalk subunits to proton translocation. In terms of biological role, key component of the F(0) channel; it plays a direct role in translocation across the membrane. A homomeric c-ring of between 10-14 subunits forms the central stalk rotor element with the F(1) delta and epsilon subunits. This chain is ATP synthase subunit c, found in Cereibacter sphaeroides (strain ATCC 17025 / ATH 2.4.3) (Rhodobacter sphaeroides).